The following is a 161-amino-acid chain: MSIVKEFREFIARGNVVDLAVGVIIGAAFNGIVKSLVDGVIMPPIGLVTGGLDFSKLQWVLKPEDPVTEAVELVAIQYGAFINTVIQFLIVAVVVFLLVKLVNHIRRADAAEPAPEAPAAPTPEERLLTEIRDLLAKPATVTAAPKAAAAPVAKPKTKPKA.

The next 2 membrane-spanning stretches (helical) occupy residues 21–41 and 79–99; these read VGVI…DGVI and GAFI…FLLV. Residues 142 to 154 are compositionally biased toward low complexity; sequence TAAPKAAAAPVAK. The disordered stretch occupies residues 142 to 161; sequence TAAPKAAAAPVAKPKTKPKA.

It belongs to the MscL family. Homopentamer.

The protein resides in the cell inner membrane. Channel that opens in response to stretch forces in the membrane lipid bilayer. May participate in the regulation of osmotic pressure changes within the cell. The protein is Large-conductance mechanosensitive channel of Caulobacter sp. (strain K31).